A 205-amino-acid chain; its full sequence is Large ribosomal subunit protein uL13 (205 aa).

Belongs to the universal ribosomal protein uL13 family.

The sequence is that of Large ribosomal subunit protein uL13 (RPL13A) from Lupinus luteus (European yellow lupine).